A 628-amino-acid chain; its full sequence is MSHRILCVAFCVCSLVAVSSIYSPPFNHPIVYSNNAICFQLSTWRIPQLYLAVLIRRFDLSLSTRGVMLAVTVGVGSSQHHSQRSGLSLTFAMTPSMITLLVKTCVISQRTAVGEPHRPGWVWEVGRTEDETCHAHSPRGAPCHQGRIPLYSAAVESVDQIQVAVRFAQRHRLRLVVRNTGHDTAGRSSGSDSFQIHCHRMKQIEYHDNFRALGSDIDRGPAVSVGAGVTLGEMYARGARDGWVVVGGECPTVGAAGGFLQGGGVSSFHSFIDGLAVDNVLEFEVVTAKGDVVVANDHQNPDIFWALRGGGGGTFGIVTRATMRVHLNSPVCVSEVAVSGLRNNSLLWTKGITGLFSILRSFNQQGIPGQFILRPLSKDQVNASLTLYSLNTDDTRRSAENMLSIRNILESTTLPFTLASRCLPKISDALRKGPDMLPVNYGIITGSVLVSEDLFNSEEGPLHLAKQLEHFPMGPMDLLFTSNLGGNVSANTGKKHRDTSMHPGWRQAAHLINFVRSVSTPTAHEKARSLEELHSVQMRQLYDIEPDFRVSYRNLGDPLESDAAQVYWGPNYKRLLEIKRKWDPEDLFFSQLGVGSEGWTEDQMCKRQQRLQQMLQYLMSSIAQRVYR.

A signal peptide spans 1–20; it reads MSHRILCVAFCVCSLVAVSS. The FAD-binding PCMH-type domain occupies 144 to 328; sequence HQGRIPLYSA…TRATMRVHLN (185 aa). H182 is modified (pros-8alpha-FAD histidine). N343, N382, and N487 each carry an N-linked (GlcNAc...) asparagine glycan.

The protein belongs to the oxygen-dependent FAD-linked oxidoreductase family. FAD serves as cofactor.

Its pathway is alkaloid biosynthesis; ergot alkaloid biosynthesis. Functionally, FAD binding oxidoreductase; part of the gene cluster that mediates the biosynthesis of fumiclavanine C, a fungal ergot alkaloid. DmaW catalyzes the first step of ergot alkaloid biosynthesis by condensing dimethylallyl diphosphate (DMAP) and tryptophan to form 4-dimethylallyl-L-tryptophan. The second step is catalyzed by the methyltransferase easF that methylates 4-dimethylallyl-L-tryptophan in the presence of S-adenosyl-L-methionine, resulting in the formation of 4-dimethylallyl-L-abrine. The catalase easC and the FAD-dependent oxidoreductase easE then transform 4-dimethylallyl-L-abrine to chanoclavine-I which is further oxidized by EasD in the presence of NAD(+), resulting in the formation of chanoclavine-I aldehyde. EasA reduces chanoclavine-I aldehyde to dihydrochanoclavine-I aldehyde that spontaneously dehydrates to form 6,8-dimethyl-6,7-didehydroergoline. EasG then catalyzes the reduction of 6,8-dimethyl-6,7-didehydroergoline to form festuclavine. Hydrolysis of festuclavine by easM then leads to the formation of fumigaclavine B which is in turn acetylated by easN to fumigaclavine A. Finally, easL catalyzes the conversion of fumigaclavine A into fumigaclavine C by attaching a dimethylallyl moiety to C-2 of the indole nucleus. The sequence is that of FAD-linked oxidoreductase easE from Aspergillus fumigatus (strain ATCC MYA-4609 / CBS 101355 / FGSC A1100 / Af293) (Neosartorya fumigata).